A 205-amino-acid chain; its full sequence is Arginine exporter protein ArgO (205 aa).

A run of 6 helical transmembrane segments spans residues 1-21 (MLAVYLHGFILSAAMILPLGP), 42-62 (LCALSDIILICAGIFGGSALL), 67-87 (LLLALVTWGGVAFLMWYGWGA), 111-131 (ILVTLLAVTWLNPHVYLDTFV), 147-167 (WFALGAVTASIVWFFALAFLA), and 185-205 (LFVGGVMGFIAFQLARQGFGL).

This sequence belongs to the LysE/ArgO transporter (TC 2.A.75) family.

It localises to the cell inner membrane. The catalysed reaction is L-arginine(in) = L-arginine(out). Involved in the export of arginine. Important to control the intracellular level of arginine and the correct balance between arginine and lysine. This Yersinia pseudotuberculosis serotype O:3 (strain YPIII) protein is Arginine exporter protein ArgO.